The primary structure comprises 317 residues: NADH-ubiquinone oxidoreductase chain 1 (317 aa).

9 consecutive transmembrane segments (helical) span residues 3-23 (YIEL…LTVA), 37-57 (PNAV…KLLL), 69-89 (LILF…WSVI), 103-123 (GFIL…LAGW), 141-161 (LISY…IGGT), 173-193 (AIWY…GCVA), 207-227 (SELV…LFFL), 247-267 (GGTG…YIWV), and 282-302 (LCWM…PAYL).

The protein belongs to the complex I subunit 1 family.

The protein localises to the mitochondrion inner membrane. It catalyses the reaction a ubiquinone + NADH + 5 H(+)(in) = a ubiquinol + NAD(+) + 4 H(+)(out). Core subunit of the mitochondrial membrane respiratory chain NADH dehydrogenase (Complex I) that is believed to belong to the minimal assembly required for catalysis. Complex I functions in the transfer of electrons from NADH to the respiratory chain. The immediate electron acceptor for the enzyme is believed to be ubiquinone. The polypeptide is NADH-ubiquinone oxidoreductase chain 1 (NAD1) (Candida albicans (strain SC5314 / ATCC MYA-2876) (Yeast)).